A 353-amino-acid polypeptide reads, in one-letter code: Guanine nucleotide-binding protein subunit beta-5 (353 aa).

7 WD repeats span residues 61–100 (GHGNKVLCMDWCKDKRRIVSSSQDGKVIVWDSFTTNKEHA), 103–142 (MPCTWVMACAYAPSGCAIACGGLDNKCSVYPLTFDKNENM), 151–192 (MHTN…QSFH), 194–236 (HGAD…QAFE), 237–276 (THESDINSVRYYPSGDAFASGSDDATCRLYDLRADREVAI), 278–320 (SKES…RVSI), and 323–352 (GHENRVSTLRVSPDGTAFCSGSWDHTLRVW).

The protein belongs to the WD repeat G protein beta family. As to quaternary structure, component of a complex composed of RGS9 (isoform RGS9-1), GNB5 and RGS9BP; within this complex, the presence of GNB5 stabilizes both itself and RGS9 and increases RGS9 GTPase-activating protein (GAP) activity. Interacts with RGS7, forming the RGS7-GNB5 complex; within this complex, the presence of GNB5 increases RGS7 GTPase-activating protein (GAP) activity. Interacts with GPR158; promotes the GTPase activator activity of the RGS7-GNB5 complex in absence of glycine, in contrast GTPase activator activity of the RGS7-GNB5 complex is inhibited in presence of glycine. Interacts with RGS6.

It localises to the membrane. Its function is as follows. Enhances GTPase-activating protein (GAP) activity of regulator of G protein signaling (RGS) proteins, such as RGS7 and RGS9, hence involved in the termination of the signaling initiated by the G protein coupled receptors (GPCRs) by accelerating the GTP hydrolysis on the G-alpha subunits, thereby promoting their inactivation. Increases RGS7 GTPase-activating protein (GAP) activity, thereby regulating mood and cognition. Increases RGS9 GTPase-activating protein (GAP) activity, hence contributes to the deactivation of G protein signaling initiated by D(2) dopamine receptors. May play an important role in neuronal signaling, including in the parasympathetic, but not sympathetic, control of heart rate. The sequence is that of Guanine nucleotide-binding protein subunit beta-5 (GNB5) from Oryctolagus cuniculus (Rabbit).